The primary structure comprises 206 residues: Small ribosomal subunit protein uS5 (206 aa).

The span at 1 to 15 shows a compositional bias: polar residues; it reads MTDTPTKQEIQSKND. A disordered region spans residues 1 to 50; the sequence is MTDTPTKQEIQSKNDNVPAATPVEQKKNNRNDRKRNRRGDSKNLERDSDW. Residues 38–50 are compositionally biased toward basic and acidic residues; that stretch reads RGDSKNLERDSDW. In terms of domain architecture, S5 DRBM spans 50 to 113; that stretch reads WQERVVQIRR…SDGKKNLVRV (64 aa).

The protein belongs to the universal ribosomal protein uS5 family. In terms of assembly, part of the 30S ribosomal subunit. Contacts proteins S4 and S8.

In terms of biological role, with S4 and S12 plays an important role in translational accuracy. Its function is as follows. Located at the back of the 30S subunit body where it stabilizes the conformation of the head with respect to the body. This is Small ribosomal subunit protein uS5 from Prochlorococcus marinus (strain AS9601).